Reading from the N-terminus, the 127-residue chain is UPF0102 protein Reut_A3265 (127 aa).

Belongs to the UPF0102 family.

This chain is UPF0102 protein Reut_A3265, found in Cupriavidus pinatubonensis (strain JMP 134 / LMG 1197) (Cupriavidus necator (strain JMP 134)).